The primary structure comprises 161 residues: MPDELRAEKSFPSKPYDSLKNKSEFDRVYRKGFKKHNPFFSLFVLDLSKEPPKEKEGFKDPLSCRLKDRNTLCLLGLSVSKKVGNAVKRNLIKRRLRSLVTRHAALCQGFALVFVPRSDCYHLDFWALEKHFLEMLTSIKDYMNKALKDLKKGMTHTHAKQ.

This sequence belongs to the RnpA family. As to quaternary structure, consists of a catalytic RNA component (M1 or rnpB) and a protein subunit.

The catalysed reaction is Endonucleolytic cleavage of RNA, removing 5'-extranucleotides from tRNA precursor.. Its function is as follows. RNaseP catalyzes the removal of the 5'-leader sequence from pre-tRNA to produce the mature 5'-terminus. It can also cleave other RNA substrates such as 4.5S RNA. The protein component plays an auxiliary but essential role in vivo by binding to the 5'-leader sequence and broadening the substrate specificity of the ribozyme. The chain is Ribonuclease P protein component from Helicobacter pylori (strain J99 / ATCC 700824) (Campylobacter pylori J99).